We begin with the raw amino-acid sequence, 250 residues long: Small ribosomal subunit protein uS3 (250 aa).

A KH type-2 domain is found at 39–111 (IRTLIKNHYP…KVQINIFEVK (73 aa)).

Belongs to the universal ribosomal protein uS3 family. Part of the 30S ribosomal subunit. Forms a tight complex with proteins S10 and S14.

Functionally, binds the lower part of the 30S subunit head. Binds mRNA in the 70S ribosome, positioning it for translation. This is Small ribosomal subunit protein uS3 from Rubus stunt phytoplasma.